Consider the following 657-residue polypeptide: uncharacterized protein (657 aa).

Residues 1–17 (MACVLACVAVLIGAASA) form the signal peptide.

This is an uncharacterized protein from Orgyia pseudotsugata (Douglas-fir tussock moth).